The chain runs to 229 residues: ACD11 homolog protein (229 aa).

Positions 84, 88, 123, 127, and 166 each coordinate an N-acylsphingoid base 1-phosphate.

Belongs to the GLTP family.

This is ACD11 homolog protein from Arabidopsis thaliana (Mouse-ear cress).